The following is a 387-amino-acid chain: Synaptotagmin-8 (387 aa).

At 1-34 (MGHPPVSPSAPAPAGTTAIPGLIPDLVAGTPWPR) the chain is on the extracellular side. The chain crosses the membrane as a helical; Signal-anchor for type III membrane protein span at residues 35–55 (WALIAGALAAGVLLVSCLLCA). The Cytoplasmic portion of the chain corresponds to 56-387 (ACCCCRRHRK…LRLRLPLPHS (332 aa)). The tract at residues 70 to 99 (KESVGLGSARGTTTTHLVQPDVDGLESSPG) is disordered. C2 domains are found at residues 103 to 219 (QWGC…EHWY) and 231 to 346 (QVGE…QHWA).

It belongs to the synaptotagmin family. Homodimer or homooligomer. Homodimerization and homooligomerization do not depend on Ca(2+). Interacts with SYNCRIP isoform 2 C-terminus. Binds inositol 1,3,4,5-tetrakisphosphate (IP4). Binds to AP2 in a Ca(2+)-independent manner. Interacts with STX1A, STX1B and STX2; the interaction is Ca(2+)-dependent.

It localises to the cell membrane. The protein localises to the cytoplasmic vesicle. It is found in the secretory vesicle. Its subcellular location is the acrosome. In terms of biological role, involved in the trafficking and exocytosis of secretory vesicles in non-neuronal tissues. Mediates Ca(2+)-regulation of exocytosis acrosomal reaction in sperm. May mediate Ca(2+)-regulation of exocytosis in insulin secreted cells. This chain is Synaptotagmin-8 (SYT8), found in Homo sapiens (Human).